We begin with the raw amino-acid sequence, 404 residues long: Argininosuccinate synthase (404 aa).

ATP contacts are provided by residues 11–19 (AYSGGLDTS) and alanine 40. L-citrulline-binding residues include tyrosine 92 and serine 97. Glycine 122 lines the ATP pocket. Residues threonine 124, asparagine 128, and aspartate 129 each contribute to the L-aspartate site. Residue asparagine 128 participates in L-citrulline binding. Positions 132, 181, 190, 266, and 278 each coordinate L-citrulline.

It belongs to the argininosuccinate synthase family. Type 1 subfamily. As to quaternary structure, homotetramer.

The protein localises to the cytoplasm. It carries out the reaction L-citrulline + L-aspartate + ATP = 2-(N(omega)-L-arginino)succinate + AMP + diphosphate + H(+). It functions in the pathway amino-acid biosynthesis; L-arginine biosynthesis; L-arginine from L-ornithine and carbamoyl phosphate: step 2/3. The chain is Argininosuccinate synthase from Moritella abyssi.